The primary structure comprises 316 residues: Thioredoxin reductase (316 aa).

FAD is bound at residue 36-43; the sequence is ERGIPGGQ. Cysteines 135 and 138 form a disulfide. An FAD-binding site is contributed by 278–287; that stretch reads DIREKSLRQI.

The protein belongs to the class-II pyridine nucleotide-disulfide oxidoreductase family. In terms of assembly, homodimer. FAD serves as cofactor.

The protein localises to the cytoplasm. The enzyme catalyses [thioredoxin]-dithiol + NADP(+) = [thioredoxin]-disulfide + NADPH + H(+). The sequence is that of Thioredoxin reductase (trxB) from Bacillus subtilis (strain 168).